The chain runs to 108 residues: Histone H4 (108 aa).

Residues 1–24 (MTGRGKGGKVLSLGGKGGKGAKRH) are disordered. A DNA-binding region spans residues 17–21 (GGKGA).

This sequence belongs to the histone H4 family. The nucleosome is a histone octamer containing two molecules each of H2A, H2B, H3 and H4 assembled in one H3-H4 heterotetramer and two H2A-H2B heterodimers. The octamer wraps approximately 147 bp of DNA.

The protein resides in the nucleus. It is found in the chromosome. Functionally, core component of nucleosome. Nucleosomes wrap and compact DNA into chromatin, limiting DNA accessibility to the cellular machineries which require DNA as a template. Histones thereby play a central role in transcription regulation, DNA repair, DNA replication and chromosomal stability. DNA accessibility is regulated via a complex set of post-translational modifications of histones, also called histone code, and nucleosome remodeling. The protein is Histone H4 of Mastigamoeba balamuthi (Phreatamoeba balamuthi).